We begin with the raw amino-acid sequence, 466 residues long: Glutamate--tRNA ligase 1 (466 aa).

The 'HIGH' region motif lies at Pro9 to Asn19. Residues Lys238–Arg242 carry the 'KMSKS' region motif. Position 241 (Lys241) interacts with ATP.

It belongs to the class-I aminoacyl-tRNA synthetase family. Glutamate--tRNA ligase type 1 subfamily. Monomer.

Its subcellular location is the cytoplasm. It carries out the reaction tRNA(Glu) + L-glutamate + ATP = L-glutamyl-tRNA(Glu) + AMP + diphosphate. In terms of biological role, catalyzes the attachment of glutamate to tRNA(Glu) in a two-step reaction: glutamate is first activated by ATP to form Glu-AMP and then transferred to the acceptor end of tRNA(Glu). The polypeptide is Glutamate--tRNA ligase 1 (Gluconacetobacter diazotrophicus (strain ATCC 49037 / DSM 5601 / CCUG 37298 / CIP 103539 / LMG 7603 / PAl5)).